We begin with the raw amino-acid sequence, 96 residues long: MKCFAQIVVLLLVIAFSHGAVITGVCDRDAQCGSGTCCAASAFSRNIRFCVPLGNNGEECHPASHKVPSDGKRLSSLCPCNTGLTCSKSGEKYQCS.

Positions 1–19 are cleaved as a signal peptide; that stretch reads MKCFAQIVVLLLVIAFSHG. Intrachain disulfides connect Cys26/Cys38, Cys32/Cys50, Cys37/Cys78, Cys60/Cys86, and Cys80/Cys95.

It belongs to the AVIT (prokineticin) family. As to expression, expressed by the skin glands.

It localises to the secreted. Potent agonist for both PKR1/PROKR1 and PKR2/PROKR2, and inducer of a potent and long-lasting hyperalgesia. Also potentiates capsaicin-induced TRPV1 current, when tested on DRG neurons. At subnanomolar concentrations, this protein both induces potent chemotaxis of macrophages and stimulates LPS-induced production of the pro-inflammatory cytokines IL-1 and IL-12. In vivo, potently stimulates the contraction of the guinea-pig gastrointestinal (GI) smooth muscle (nanomolar concentration). This Bombina maxima (Giant fire-bellied toad) protein is Prokineticin Bm8-f.